The primary structure comprises 508 residues: Cytochrome P450 monooxygenase tenA (508 aa).

A helical transmembrane segment spans residues 8–24 (VSLPYLILSACLSVILL). C456 lines the heme pocket.

Belongs to the cytochrome P450 family. The cofactor is heme.

It is found in the membrane. It functions in the pathway secondary metabolite biosynthesis. Functionally, cytochrome P450 monooxygenase; part of the gene cluster that mediates the biosynthesis of tenellin-type 2-pyridones, iron-chelating compounds involved in iron stress tolerance, competition with the natural competitor fungus Metarhizium robertsii and insect hosts infection. TenA catalyzes an oxidative ring expansion of pretenellin A and 14-hydropretellenin A to form the 2-pyridone core, leading to the production of pretenellin B and pyridovericin, respectively. The pathway begins with the assembly of the polyketide-amino acid backbone by the hybrid PKS-NRPS tenS with the help of the enoyl reductase tenC. These enzymes catalyze the synthesis of the pyrrolidine-2-dione intermediates pretellinin A, 11-hydropretellenin A, 12-hydropretellenin A, 13-hydropretellenin A, 14-hydropretellenin A, 12-oxopretellenin A and prototellinin D. The cytochrome P450 monooxygenase tenA then catalyzes an oxidative ring expansion of pretenellin A and 14-hydropretellenin A to form the 2-pyridone core, leading to pretenellin B and pyridovericin, respectively. The cytochrome P450 monooxygenase tenB is then required for the selective N-hydroxylation of the 2-pyridone nitrogen of yield tellinin and 15-hydroxytellenin (15-HT), respectively. The UDP-glucosyltransferase GT1 and the methyltransferase MT1, located outside the tenS gene cluster, contribute to the stepwise glycosylation and methylation of 15-HT to obtain the glycoside pyridovericin-N-O-(4-O-methyl-beta-D-glucopyranoside) (PMGP). Additional related compounds such as 1-O-methyl-15-HT, (8Z)-1-O-methyl-15-HT, and O-methyltenellin A are also produced but the enzymes involved in their biosynthesis have still to be determined. This Beauveria bassiana (White muscardine disease fungus) protein is Cytochrome P450 monooxygenase tenA.